The chain runs to 261 residues: 5'-nucleotidase SurE (261 aa).

Asp-8, Asp-9, Ser-40, and Asn-94 together coordinate a divalent metal cation.

It belongs to the SurE nucleotidase family. A divalent metal cation is required as a cofactor.

Its subcellular location is the cytoplasm. The catalysed reaction is a ribonucleoside 5'-phosphate + H2O = a ribonucleoside + phosphate. Functionally, nucleotidase that shows phosphatase activity on nucleoside 5'-monophosphates. This is 5'-nucleotidase SurE from Anaplasma marginale (strain Florida).